Consider the following 142-residue polypeptide: Alpha-lactalbumin (142 aa).

The signal sequence occupies residues methionine 1–alanine 19. One can recognise a C-type lysozyme domain in the interval glutamate 20–leucine 142. Intrachain disulfides connect cysteine 25-cysteine 139, cysteine 47-cysteine 130, cysteine 80-cysteine 96, and cysteine 92-cysteine 110. Residue asparagine 64 is glycosylated (N-linked (GlcNAc...) asparagine). Residues lysine 98, aspartate 101, aspartate 103, aspartate 106, and aspartate 107 each contribute to the Ca(2+) site.

The protein belongs to the glycosyl hydrolase 22 family. Lactose synthase (LS) is a heterodimer of a catalytic component, beta1,4-galactosyltransferase (beta4Gal-T1) and a regulatory component, alpha-lactalbumin (LA). As to expression, mammary gland specific. Secreted in milk.

It localises to the secreted. In terms of biological role, regulatory subunit of lactose synthase, changes the substrate specificity of galactosyltransferase in the mammary gland making glucose a good acceptor substrate for this enzyme. This enables LS to synthesize lactose, the major carbohydrate component of milk. In other tissues, galactosyltransferase transfers galactose onto the N-acetylglucosamine of the oligosaccharide chains in glycoproteins. The chain is Alpha-lactalbumin (LALBA) from Bos taurus (Bovine).